A 357-amino-acid polypeptide reads, in one-letter code: Guanine nucleotide-binding protein alpha-2 subunit (357 aa).

Gly-2 is lipidated: N-myristoyl glycine. Residue Cys-4 is the site of S-palmitoyl cysteine attachment. One can recognise a G-alpha domain in the interval 30–356; it reads NEVKLLLLGA…TQCVMKAGLY (327 aa). A G1 motif region spans residues 33-46; the sequence is KLLLLGAGESGKST. Residues Glu-41, Ser-42, Gly-43, Lys-44, Ser-45, and Thr-46 each contribute to the GTP site. Residue Ser-45 coordinates Mg(2+). Ser-113 carries the post-translational modification Phosphoserine. GTP contacts are provided by Asp-154, Leu-179, Thr-185, Gly-207, Asn-272, Lys-273, Asp-275, and Ala-328. The tract at residues 177-185 is G2 motif; sequence DILHTRVMT. Thr-185 is a Mg(2+) binding site. Positions 200–209 are G3 motif; that stretch reads FRLVDVGGQR. Residues 268–275 are G4 motif; that stretch reads ILFLNKSD. Residues 326 to 331 form a G5 motif region; it reads TCATDT.

Belongs to the G-alpha family. In terms of assembly, g proteins are composed of 3 units; alpha, beta and gamma. The alpha chain contains the guanine nucleotide binding site. Interacts with the RAP guanine nucleotide exchange factor glfB. Requires Mg(2+) as cofactor. Post-translationally, ser-113 is transiently phosphorylated following stimulation with extracellular cAMP.

In terms of biological role, guanine nucleotide-binding proteins (G proteins) are involved as modulators or transducers in various transmembrane signaling systems. G alpha-2 is required for the early aggregation process and most of the known cAMP receptor-mediated responses. Interacts with downstream effector gflB, a Rap guanine nucleotide exchange factor, to regulate the balance between Ras and Rap signaling at the leading edge of chemotaxing cells. This is Guanine nucleotide-binding protein alpha-2 subunit (gpaB) from Dictyostelium discoideum (Social amoeba).